We begin with the raw amino-acid sequence, 411 residues long: Peptide chain release factor subunit 1 (411 aa).

This sequence belongs to the eukaryotic release factor 1 family. Heterodimer of two subunits, one of which binds GTP.

The protein resides in the cytoplasm. In terms of biological role, directs the termination of nascent peptide synthesis (translation) in response to the termination codons UAA, UAG and UGA. This chain is Peptide chain release factor subunit 1, found in Methanosphaera stadtmanae (strain ATCC 43021 / DSM 3091 / JCM 11832 / MCB-3).